A 534-amino-acid chain; its full sequence is Lariat debranching enzyme A (534 aa).

A divalent metal cation contacts are provided by cysteine 8, histidine 10, aspartate 39, and asparagine 84. The tract at residues 124–154 is lariat recognition loop; sequence SGIFKSHDYRKGHFERPPYSKDTVRSAYHVR. The a divalent metal cation site is built by histidine 174, histidine 226, and histidine 228. Disordered regions lie at residues 386-439 and 469-534; these read EEEK…QEDE and SMAV…DEDE. Over residues 388–400 the composition is skewed to acidic residues; sequence EKEDFDMTEDNEA. The span at 413–424 shows a compositional bias: polar residues; sequence STDTSILSTSVN. Acidic residues predominate over residues 428–439; that stretch reads ITLEDDDEQEDE. The segment covering 484 to 499 has biased composition (basic and acidic residues); the sequence is ELDRSESSQTEGEGKQ.

The protein belongs to the lariat debranching enzyme family. Fe(2+) serves as cofactor. Zn(2+) is required as a cofactor. Requires Mn(2+) as cofactor.

Its subcellular location is the nucleus. Active in presence of diverse metals including Fe(2+), Zn(2+), Mn(2+). Also activated by Ca(2+). Binds two metal cations in two adjacent alpha and beta metal-binding pockets. Cleaves the 2'-5' phosphodiester linkage at the branch point of excised lariat intron RNA and converts them into linear molecules that can be subsequently degraded, thereby facilitating ribonucleotide turnover. Linked to its role in pre-mRNA processing mechanism, may also participate in retrovirus replication and have an antiviral cell-intrinsic defense function. This chain is Lariat debranching enzyme A (dbr1-a), found in Xenopus laevis (African clawed frog).